The sequence spans 98 residues: Co-chaperonin GroES 1 (98 aa).

Belongs to the GroES chaperonin family. In terms of assembly, heptamer of 7 subunits arranged in a ring. Interacts with the chaperonin GroEL.

It is found in the cytoplasm. In terms of biological role, together with the chaperonin GroEL, plays an essential role in assisting protein folding. The GroEL-GroES system forms a nano-cage that allows encapsulation of the non-native substrate proteins and provides a physical environment optimized to promote and accelerate protein folding. GroES binds to the apical surface of the GroEL ring, thereby capping the opening of the GroEL channel. The chain is Co-chaperonin GroES 1 from Rhodopseudomonas palustris (strain ATCC BAA-98 / CGA009).